The primary structure comprises 1347 residues: Protein HUA2-LIKE 3 (1347 aa).

The 58-residue stretch at 24-81 (VGDLVLAKVKGFPAWPAVVDEPEKWGHSADSKKVTVHFFGTQQIAFCNHGDVESFTEE) folds into the PWWP domain. Disordered regions lie at residues 110 to 137 (KLKQ…TSQL), 251 to 320 (DGGP…SGSK), and 383 to 402 (DSCQ…PCEE). Over residues 127-137 (TAGSSGNTSQL) the composition is skewed to polar residues. A compositionally biased stretch (low complexity) spans 302–314 (VESNNNSRNEGNG). Residues 390–402 (NSHERLNERPCEE) are compositionally biased toward basic and acidic residues. One can recognise a CID domain in the interval 845–986 (DVQCTVESFE…HHIRELDSLS (142 aa)). Disordered stretches follow at residues 1037–1069 (RDED…VTPS), 1121–1140 (TSHQ…QNAQ), 1147–1223 (YSNG…YSYM), and 1259–1347 (RMRP…WHQR). Positions 1038–1049 (DEDEGSDSDGGD) are enriched in acidic residues. Residues 1054-1069 (TPEHESRSLEEHVTPS) show a composition bias toward basic and acidic residues. Residues 1181–1191 (PSYSSRVSLSK) show a composition bias toward polar residues. Pro residues predominate over residues 1208-1217 (SSHPPPPPPS). Basic and acidic residues predominate over residues 1259–1272 (RMRPEPCENRDNWR).

Expressed throughout young primordia, and vegetative and reproductive apices.

The protein localises to the nucleus. Probable transcription factor that acts with partial redundancy with HULK1 and HULK2. Plays diverse and essential roles in the control of plant development, physiology and flowering time. The protein is Protein HUA2-LIKE 3 of Arabidopsis thaliana (Mouse-ear cress).